We begin with the raw amino-acid sequence, 137 residues long: ATP synthase epsilon chain (137 aa).

This sequence belongs to the ATPase epsilon chain family. F-type ATPases have 2 components, CF(1) - the catalytic core - and CF(0) - the membrane proton channel. CF(1) has five subunits: alpha(3), beta(3), gamma(1), delta(1), epsilon(1). CF(0) has three main subunits: a, b and c.

It is found in the cellular thylakoid membrane. In terms of biological role, produces ATP from ADP in the presence of a proton gradient across the membrane. This chain is ATP synthase epsilon chain, found in Nostoc punctiforme (strain ATCC 29133 / PCC 73102).